A 137-amino-acid chain; its full sequence is uncharacterized protein (137 aa).

The disordered stretch occupies residues 1 to 32; it reads MRDHLPPGLPPDPFADDPCDPSAALDAVEPGQ.

This sequence to M.tuberculosis Rv3412.

This is an uncharacterized protein from Mycobacterium leprae (strain TN).